We begin with the raw amino-acid sequence, 423 residues long: Cell adhesion molecule CEACAM16 (423 aa).

The N-terminal stretch at 1–22 (MKMPLTWGSWFLLSAWILNAGA) is a signal peptide. N38 carries N-linked (GlcNAc...) asparagine glycosylation. A disordered region spans residues 77–96 (ETPGPAHTGREAVRPDGSLD). The span at 84 to 95 (TGREAVRPDGSL) shows a compositional bias: basic and acidic residues. Ig-like C2-type domains lie at 134–219 (PPTV…LNLT) and 224–310 (PERV…ASVV). C155 and C202 are joined by a disulfide. N217 carries N-linked (GlcNAc...) asparagine glycosylation. C253 and C294 are disulfide-bonded.

Belongs to the immunoglobulin superfamily. CEA family. As to quaternary structure, homooligomer; can for homodimers and homotetramers. Interacts with TECTA and TECTB.

The protein resides in the secreted. Its function is as follows. Required for proper hearing, plays a role in maintaining the integrity of the tectorial membrane. The protein is Cell adhesion molecule CEACAM16 of Rattus norvegicus (Rat).